The chain runs to 563 residues: Alpha-humulene synthase (563 aa).

Mg(2+) is bound by residues aspartate 316, aspartate 320, aspartate 461, and glutamate 469. The DDXXD motif signature appears at 316 to 320 (DDIYD).

It belongs to the terpene synthase family. Tpsa subfamily. It depends on Mg(2+) as a cofactor. Mn(2+) serves as cofactor. As to expression, expressed in trichomes, cones and young leaves.

The enzyme catalyses (2E,6E)-farnesyl diphosphate = alpha-humulene + diphosphate. It functions in the pathway sesquiterpene biosynthesis. Its pathway is secondary metabolite biosynthesis; terpenoid biosynthesis. Sesquiterpene synthase that catalyzes the formation of alpha-humulene. Can use farnesyl diphosphate (FPP) as substrate, but not geranyl diphosphate (GPP) or geranylgeranyl diphosphate (GGPP). This chain is Alpha-humulene synthase, found in Humulus lupulus (European hop).